The chain runs to 1331 residues: DNA replication ATP-dependent helicase/nuclease JHS1 (1331 aa).

The segment at 1–98 (MPPRKKPKSS…DMDQQLTEAS (98 aa)) is disordered. The Nuclear localization signal signature appears at 2 to 8 (PPRKKPK). The segment covering 11-31 (ALKSNKQSSANHSSQPSTFGI) has biased composition (polar residues). Positions 40–52 (QNSQSTSNSHTST) are enriched in low complexity. Residues 57-81 (DQQNVNGLASDTAVLTPQNPLGTSN) are compositionally biased toward polar residues. Positions 82-91 (EKPDESKDMD) are enriched in basic and acidic residues. The interval 362–811 (ECALYLWDEW…CKLRTGDRVI (450 aa)) is nuclease activity. [4Fe-4S] cluster is bound by residues Cys-422, Cys-666, Cys-669, and Cys-675. Positions 812-1331 (LRTEVSHLTV…LNLLPGDLKP (520 aa)) are helicase activity. A UvrD-like helicase ATP-binding domain is found at 924–1271 (NNDQRQAILK…VRSREKPRSS (348 aa)). Position 945 to 952 (945 to 952 (GMPGTGKT)) interacts with ATP.

It belongs to the DNA2/NAM7 helicase family. The cofactor is [4Fe-4S] cluster. As to expression, strongly expressed in meristems, including both root and shoot apical meristems (RAM and SAM). Also present in the vasculature and in young floral tissues.

Its subcellular location is the nucleus. The protein resides in the chromosome. The catalysed reaction is ATP + H2O = ADP + phosphate + H(+). In terms of biological role, essential protein required during embryogenesis. Key enzyme involved in DNA replication and damage repair, shoot apical meristem (SAM) maintenance, and development. Involved in Okazaki fragments processing. Possesses different enzymatic activities, such as single-stranded DNA (ssDNA)-dependent ATPase, 5'-3' helicase and endonuclease activities. While the ATPase and endonuclease activities are well-defined and play a key role in Okazaki fragments processing and DSB repair, the 5'-3' DNA helicase activity is atypical: it cannot load onto its tracking strand internally and has an absolute free 5'-end requirement. The polypeptide is DNA replication ATP-dependent helicase/nuclease JHS1 (Arabidopsis thaliana (Mouse-ear cress)).